Consider the following 111-residue polypeptide: Large ribosomal subunit protein uL23 (111 aa).

This sequence belongs to the universal ribosomal protein uL23 family. Part of the 50S ribosomal subunit. Contacts protein L29, and trigger factor when it is bound to the ribosome.

Its function is as follows. One of the early assembly proteins it binds 23S rRNA. One of the proteins that surrounds the polypeptide exit tunnel on the outside of the ribosome. Forms the main docking site for trigger factor binding to the ribosome. The protein is Large ribosomal subunit protein uL23 of Chlamydia trachomatis serovar L2 (strain ATCC VR-902B / DSM 19102 / 434/Bu).